Reading from the N-terminus, the 292-residue chain is Probable 2-(5''-triphosphoribosyl)-3'-dephosphocoenzyme-A synthase (292 aa).

It belongs to the CitG/MdcB family.

The catalysed reaction is 3'-dephospho-CoA + ATP = 2'-(5''-triphospho-alpha-D-ribosyl)-3'-dephospho-CoA + adenine. The protein is Probable 2-(5''-triphosphoribosyl)-3'-dephosphocoenzyme-A synthase of Shigella sonnei (strain Ss046).